A 229-amino-acid chain; its full sequence is Cytochrome c oxidase subunit 2 (229 aa).

Residues 1–14 (MPTPNQTNFQDAAS) lie on the Mitochondrial intermembrane side of the membrane. A helical transmembrane segment spans residues 15 to 45 (PLMEELTHFHDHTLMIVFMISLLVLYILLSM). At 46-59 (LSTKLTHTNTANAQ) the chain is on the mitochondrial matrix side. A helical transmembrane segment spans residues 60 to 87 (QAEMVWTILPAIILITIALPSLQILYMM). The Mitochondrial intermembrane portion of the chain corresponds to 88–229 (DEINKPHMTI…DLWLAMIDTL (142 aa)). The Cu cation site is built by H161, C196, E198, C200, H204, and M207. E198 is a binding site for Mg(2+).

It belongs to the cytochrome c oxidase subunit 2 family. As to quaternary structure, component of the cytochrome c oxidase (complex IV, CIV), a multisubunit enzyme composed of 14 subunits. The complex is composed of a catalytic core of 3 subunits MT-CO1, MT-CO2 and MT-CO3, encoded in the mitochondrial DNA, and 11 supernumerary subunits COX4I, COX5A, COX5B, COX6A, COX6B, COX6C, COX7A, COX7B, COX7C, COX8 and NDUFA4, which are encoded in the nuclear genome. The complex exists as a monomer or a dimer and forms supercomplexes (SCs) in the inner mitochondrial membrane with NADH-ubiquinone oxidoreductase (complex I, CI) and ubiquinol-cytochrome c oxidoreductase (cytochrome b-c1 complex, complex III, CIII), resulting in different assemblies (supercomplex SCI(1)III(2)IV(1) and megacomplex MCI(2)III(2)IV(2)). Found in a complex with TMEM177, COA6, COX18, COX20, SCO1 and SCO2. Interacts with TMEM177 in a COX20-dependent manner. Interacts with COX20. Interacts with COX16. Cu cation is required as a cofactor.

The protein localises to the mitochondrion inner membrane. The enzyme catalyses 4 Fe(II)-[cytochrome c] + O2 + 8 H(+)(in) = 4 Fe(III)-[cytochrome c] + 2 H2O + 4 H(+)(out). In terms of biological role, component of the cytochrome c oxidase, the last enzyme in the mitochondrial electron transport chain which drives oxidative phosphorylation. The respiratory chain contains 3 multisubunit complexes succinate dehydrogenase (complex II, CII), ubiquinol-cytochrome c oxidoreductase (cytochrome b-c1 complex, complex III, CIII) and cytochrome c oxidase (complex IV, CIV), that cooperate to transfer electrons derived from NADH and succinate to molecular oxygen, creating an electrochemical gradient over the inner membrane that drives transmembrane transport and the ATP synthase. Cytochrome c oxidase is the component of the respiratory chain that catalyzes the reduction of oxygen to water. Electrons originating from reduced cytochrome c in the intermembrane space (IMS) are transferred via the dinuclear copper A center (CU(A)) of subunit 2 and heme A of subunit 1 to the active site in subunit 1, a binuclear center (BNC) formed by heme A3 and copper B (CU(B)). The BNC reduces molecular oxygen to 2 water molecules using 4 electrons from cytochrome c in the IMS and 4 protons from the mitochondrial matrix. This chain is Cytochrome c oxidase subunit 2 (MT-CO2), found in Pelomedusa subrufa (African side-necked turtle).